The chain runs to 493 residues: MNNLVILPILIPFIVGSFLILFAKHHSLQRVISGFAVVGMLLVSIYLAVDVYQNGITVLELGNWQAPFGIVLVADLFATMMVILASIVGVVCLFFAFQTISSEREKYYFYPFYFFLLAGVNGAFLTGDLFNLFVFFEVMLIASYILIVLGGTKYQLRESLKYVVINVFASILFIVGVAYIYSITGTLNMADLAVKVGELEQTGVLNVIAVIFLVVFAMKGGLFPLYFWLPRSYFGPPAAIAALFGGLLTKVGIYAIMRTFTLIFNHDPGFTHTLILILAGLTMFFGVLGAVSQFDFKRILSYHIISQVGYMVMGLGIYTQLAIAGAIYYIAHHIIVKAALFLFAGATQRITGTTDLKKMGGLLKTHPWLAWMFFISAISLAGIPPLSGFFSKFALILAAFLNENYIIAAVALAVGLLTLFSMMKIFIYAFWGEQKHTEEQANFKVGKLLLPIVPLVALTIILGFAAEPIFQYSLQVADQILDPTIYIESVLKE.

14 helical membrane-spanning segments follow: residues 4–23 (LVIL…ILFA), 30–52 (RVIS…VDVY), 72–94 (LVAD…VCLF), 107–126 (YYFY…AFLT), 130–149 (FNLF…LIVL), 162–184 (YVVI…YSIT), 204–226 (VLNV…FPLY), 233–255 (YFGP…GIYA), 270–292 (FTHT…GAVS), 299–321 (ILSY…YTQL), 325–347 (GAIY…AGAT), 368–390 (WLAW…SGFF), 405–427 (YIIA…KIFI), and 448–470 (LLLP…EPIF).

Belongs to the CPA3 antiporters (TC 2.A.63) subunit D family. As to quaternary structure, forms a heterooligomeric complex that consists of seven subunits: MrpA, MrpB, MrpC, MrpD, MrpE, MrpF and MrpG.

It localises to the cell membrane. Mnh complex is a Na(+)Li(+)/H(+) antiporter involved in Na(+) and/or Li(+) excretion and Na(+) resistance. Na(+)/H(+) antiport consumes a transmembrane electrical potential, and is thus inferred to be electrogenic. Does not transport K(+), Ca(2+) or Mg(2+). In terms of biological role, mrp complex is a Na(+)/H(+) antiporter involved in Na(+) excretion and Na(+) resistance. The polypeptide is Na(+)/H(+) antiporter subunit D (mrpD) (Alkalihalophilus pseudofirmus (strain ATCC BAA-2126 / JCM 17055 / OF4) (Bacillus pseudofirmus)).